A 254-amino-acid polypeptide reads, in one-letter code: Hemin import ATP-binding protein HmuV (254 aa).

One can recognise an ABC transporter domain in the interval 2–239 (LNINQVNINL…DTLSQVWHYD (238 aa)). Residue 34–41 (GPNGAGKS) participates in ATP binding.

Belongs to the ABC transporter superfamily. Heme (hemin) importer (TC 3.A.1.14.5) family. In terms of assembly, the complex is composed of two ATP-binding proteins (HmuV), two transmembrane proteins (HmuU) and a solute-binding protein (HmuT).

The protein resides in the cell inner membrane. Part of the ABC transporter complex HmuTUV involved in hemin import. Responsible for energy coupling to the transport system. The polypeptide is Hemin import ATP-binding protein HmuV (Shewanella denitrificans (strain OS217 / ATCC BAA-1090 / DSM 15013)).